The following is a 156-amino-acid chain: Large ribosomal subunit protein uL22 (156 aa).

It belongs to the universal ribosomal protein uL22 family. Part of the 50S ribosomal subunit.

This protein binds specifically to 23S rRNA. It makes multiple contacts with different domains of the 23S rRNA in the assembled 50S subunit and ribosome. Functionally, the globular domain of the protein is located near the polypeptide exit tunnel on the outside of the subunit, while an extended beta-hairpin is found that lines the wall of the exit tunnel in the center of the 70S ribosome. The sequence is that of Large ribosomal subunit protein uL22 from Sulfurisphaera tokodaii (strain DSM 16993 / JCM 10545 / NBRC 100140 / 7) (Sulfolobus tokodaii).